Consider the following 168-residue polypeptide: Probable chorismate pyruvate-lyase (168 aa).

The substrate site is built by R75, I114, and E155.

This sequence belongs to the UbiC family.

The protein localises to the cytoplasm. The catalysed reaction is chorismate = 4-hydroxybenzoate + pyruvate. It functions in the pathway cofactor biosynthesis; ubiquinone biosynthesis. Removes the pyruvyl group from chorismate, with concomitant aromatization of the ring, to provide 4-hydroxybenzoate (4HB) for the ubiquinone pathway. The polypeptide is Probable chorismate pyruvate-lyase (Psychrobacter arcticus (strain DSM 17307 / VKM B-2377 / 273-4)).